Consider the following 33-residue polypeptide: Brevinin-2PTd (33 aa).

Cysteine 27 and cysteine 33 are joined by a disulfide.

In terms of tissue distribution, expressed by the skin glands.

It is found in the secreted. Functionally, has antibacterial activity against the Gram-positive bacterium S.aureus ATCC 25923 and the Gram-negative bacterium E.coli ATCC 25726. This is Brevinin-2PTd from Pulchrana picturata (Malaysian fire frog).